A 382-amino-acid chain; its full sequence is uncharacterized protein (382 aa).

The next 12 helical transmembrane spans lie at Gly14 to Ala34, Val45 to Ile65, Phe79 to Ala99, Phe102 to Ser122, Leu131 to Ser151, Leu157 to Phe177, Leu204 to Pro224, Ala235 to Ile255, Val270 to Pro290, Ala291 to Cys311, Ala325 to Met345, and Phe348 to Leu368.

The protein belongs to the major facilitator superfamily. YcaD (TC 2.A.1.26) family.

The protein localises to the cell inner membrane. This is an uncharacterized protein from Escherichia coli O7:K1 (strain IAI39 / ExPEC).